The chain runs to 184 residues: ATP synthase subunit b, chloroplastic (184 aa).

A helical transmembrane segment spans residues 27 to 49; it reads LATNPINLSVVFGVLIFFGKGVL.

It belongs to the ATPase B chain family. As to quaternary structure, F-type ATPases have 2 components, F(1) - the catalytic core - and F(0) - the membrane proton channel. F(1) has five subunits: alpha(3), beta(3), gamma(1), delta(1), epsilon(1). F(0) has four main subunits: a(1), b(1), b'(1) and c(10-14). The alpha and beta chains form an alternating ring which encloses part of the gamma chain. F(1) is attached to F(0) by a central stalk formed by the gamma and epsilon chains, while a peripheral stalk is formed by the delta, b and b' chains.

The protein resides in the plastid. The protein localises to the chloroplast thylakoid membrane. In terms of biological role, f(1)F(0) ATP synthase produces ATP from ADP in the presence of a proton or sodium gradient. F-type ATPases consist of two structural domains, F(1) containing the extramembraneous catalytic core and F(0) containing the membrane proton channel, linked together by a central stalk and a peripheral stalk. During catalysis, ATP synthesis in the catalytic domain of F(1) is coupled via a rotary mechanism of the central stalk subunits to proton translocation. Its function is as follows. Component of the F(0) channel, it forms part of the peripheral stalk, linking F(1) to F(0). The polypeptide is ATP synthase subunit b, chloroplastic (Draba nemorosa (Woodland whitlowgrass)).